A 238-amino-acid chain; its full sequence is Phosphoribosylaminoimidazole-succinocarboxamide synthase (238 aa).

The protein belongs to the SAICAR synthetase family.

The enzyme catalyses 5-amino-1-(5-phospho-D-ribosyl)imidazole-4-carboxylate + L-aspartate + ATP = (2S)-2-[5-amino-1-(5-phospho-beta-D-ribosyl)imidazole-4-carboxamido]succinate + ADP + phosphate + 2 H(+). Its pathway is purine metabolism; IMP biosynthesis via de novo pathway; 5-amino-1-(5-phospho-D-ribosyl)imidazole-4-carboxamide from 5-amino-1-(5-phospho-D-ribosyl)imidazole-4-carboxylate: step 1/2. The sequence is that of Phosphoribosylaminoimidazole-succinocarboxamide synthase from Chlorobium phaeovibrioides (strain DSM 265 / 1930) (Prosthecochloris vibrioformis (strain DSM 265)).